We begin with the raw amino-acid sequence, 365 residues long: Flagellar P-ring protein (365 aa).

Residues 1–19 (MIKFLSALILLLVTTAAQA) form the signal peptide.

This sequence belongs to the FlgI family. As to quaternary structure, the basal body constitutes a major portion of the flagellar organelle and consists of four rings (L,P,S, and M) mounted on a central rod.

The protein resides in the periplasm. It is found in the bacterial flagellum basal body. Assembles around the rod to form the L-ring and probably protects the motor/basal body from shearing forces during rotation. The chain is Flagellar P-ring protein from Shigella boydii serotype 4 (strain Sb227).